The primary structure comprises 177 residues: ATP synthase subunit delta (177 aa).

Belongs to the ATPase delta chain family. F-type ATPases have 2 components, F(1) - the catalytic core - and F(0) - the membrane proton channel. F(1) has five subunits: alpha(3), beta(3), gamma(1), delta(1), epsilon(1). F(0) has three main subunits: a(1), b(2) and c(10-14). The alpha and beta chains form an alternating ring which encloses part of the gamma chain. F(1) is attached to F(0) by a central stalk formed by the gamma and epsilon chains, while a peripheral stalk is formed by the delta and b chains.

It is found in the cell membrane. F(1)F(0) ATP synthase produces ATP from ADP in the presence of a proton or sodium gradient. F-type ATPases consist of two structural domains, F(1) containing the extramembraneous catalytic core and F(0) containing the membrane proton channel, linked together by a central stalk and a peripheral stalk. During catalysis, ATP synthesis in the catalytic domain of F(1) is coupled via a rotary mechanism of the central stalk subunits to proton translocation. Functionally, this protein is part of the stalk that links CF(0) to CF(1). It either transmits conformational changes from CF(0) to CF(1) or is implicated in proton conduction. In Buchnera aphidicola subsp. Acyrthosiphon pisum (strain APS) (Acyrthosiphon pisum symbiotic bacterium), this protein is ATP synthase subunit delta.